A 418-amino-acid polypeptide reads, in one-letter code: Histidine--tRNA ligase (418 aa).

This sequence belongs to the class-II aminoacyl-tRNA synthetase family.

The protein resides in the cytoplasm. It carries out the reaction tRNA(His) + L-histidine + ATP = L-histidyl-tRNA(His) + AMP + diphosphate + H(+). In Methanococcus aeolicus (strain ATCC BAA-1280 / DSM 17508 / OCM 812 / Nankai-3), this protein is Histidine--tRNA ligase.